We begin with the raw amino-acid sequence, 514 residues long: 2,3-bisphosphoglycerate-independent phosphoglycerate mutase (514 aa).

2 residues coordinate Mn(2+): aspartate 14 and serine 64. Serine 64 functions as the Phosphoserine intermediate in the catalytic mechanism. Substrate-binding positions include histidine 125, 155–156 (RD), arginine 187, arginine 193, 263–266 (RADR), and lysine 336. Residues aspartate 403, histidine 407, aspartate 444, histidine 445, and histidine 463 each contribute to the Mn(2+) site.

The protein belongs to the BPG-independent phosphoglycerate mutase family. Monomer. It depends on Mn(2+) as a cofactor.

It carries out the reaction (2R)-2-phosphoglycerate = (2R)-3-phosphoglycerate. It functions in the pathway carbohydrate degradation; glycolysis; pyruvate from D-glyceraldehyde 3-phosphate: step 3/5. In terms of biological role, catalyzes the interconversion of 2-phosphoglycerate and 3-phosphoglycerate. The protein is 2,3-bisphosphoglycerate-independent phosphoglycerate mutase of Escherichia coli (strain ATCC 8739 / DSM 1576 / NBRC 3972 / NCIMB 8545 / WDCM 00012 / Crooks).